Reading from the N-terminus, the 155-residue chain is Regulatory protein RecX (155 aa).

It belongs to the RecX family.

The protein localises to the cytoplasm. Functionally, modulates RecA activity. The protein is Regulatory protein RecX of Pseudomonas syringae pv. tomato (strain ATCC BAA-871 / DC3000).